A 543-amino-acid polypeptide reads, in one-letter code: CTP synthase (543 aa).

Positions 1 to 265 (MARYIFITGG…DGEVLRHFGL (265 aa)) are amidoligase domain. Ser-13 serves as a coordination point for CTP. Ser-13 contributes to the UTP binding site. 14-19 (SLGKGL) serves as a coordination point for ATP. An L-glutamine-binding site is contributed by Tyr-54. Asp-71 is an ATP binding site. Asp-71 and Glu-139 together coordinate Mg(2+). CTP-binding positions include 146-148 (DIE), 186-191 (KTKPTQ), and Lys-222. Residues 186 to 191 (KTKPTQ) and Lys-222 each bind UTP. The Glutamine amidotransferase type-1 domain occupies 290-542 (TIGVVGKYVG…IAAAVKQARL (253 aa)). Gly-354 is an L-glutamine binding site. The active-site Nucleophile; for glutamine hydrolysis is the Cys-381. Residues 382 to 385 (LGMQ), Glu-405, and Arg-470 contribute to the L-glutamine site. Residues His-515 and Glu-517 contribute to the active site.

This sequence belongs to the CTP synthase family. As to quaternary structure, homotetramer.

The catalysed reaction is UTP + L-glutamine + ATP + H2O = CTP + L-glutamate + ADP + phosphate + 2 H(+). It catalyses the reaction L-glutamine + H2O = L-glutamate + NH4(+). It carries out the reaction UTP + NH4(+) + ATP = CTP + ADP + phosphate + 2 H(+). It participates in pyrimidine metabolism; CTP biosynthesis via de novo pathway; CTP from UDP: step 2/2. With respect to regulation, allosterically activated by GTP, when glutamine is the substrate; GTP has no effect on the reaction when ammonia is the substrate. The allosteric effector GTP functions by stabilizing the protein conformation that binds the tetrahedral intermediate(s) formed during glutamine hydrolysis. Inhibited by the product CTP, via allosteric rather than competitive inhibition. Functionally, catalyzes the ATP-dependent amination of UTP to CTP with either L-glutamine or ammonia as the source of nitrogen. Regulates intracellular CTP levels through interactions with the four ribonucleotide triphosphates. The polypeptide is CTP synthase (Novosphingobium aromaticivorans (strain ATCC 700278 / DSM 12444 / CCUG 56034 / CIP 105152 / NBRC 16084 / F199)).